A 115-amino-acid polypeptide reads, in one-letter code: Dolichyl-diphosphooligosaccharide--protein glycosyltransferase subunit DAD1 (115 aa).

The Cytoplasmic segment spans residues 1–31; that stretch reads MVKSTSKDAQDLFRSLRSAYSATPTNLKIID. Residues 32–52 traverse the membrane as a helical segment; sequence LYVVFAVFTALIQVVYMALVG. Over 53 to 55 the chain is Lumenal; it reads SFP. Residues 56–76 form a helical membrane-spanning segment; it reads FNSFLSGVLSCIGTAVLAVCL. The Cytoplasmic portion of the chain corresponds to 77 to 94; the sequence is RIQVNKENKEFKDLAPER. The helical transmembrane segment at 95–115 threads the bilayer; that stretch reads AFADFVLCNLVLHLVIINFLG.

It belongs to the DAD/OST2 family. As to quaternary structure, component of the oligosaccharyltransferase (OST) complex. Ubiquitous.

The protein localises to the endoplasmic reticulum membrane. Its pathway is protein modification; protein glycosylation. Its function is as follows. Subunit of the oligosaccharyl transferase (OST) complex that catalyzes the initial transfer of a defined glycan (Glc(3)Man(9)GlcNAc(2) in eukaryotes) from the lipid carrier dolichol-pyrophosphate to an asparagine residue within an Asn-X-Ser/Thr consensus motif in nascent polypeptide chains, the first step in protein N-glycosylation. N-glycosylation occurs cotranslationally and the complex associates with the Sec61 complex at the channel-forming translocon complex that mediates protein translocation across the endoplasmic reticulum (ER). All subunits are required for a maximal enzyme activity. This chain is Dolichyl-diphosphooligosaccharide--protein glycosyltransferase subunit DAD1 (DAD1), found in Arabidopsis thaliana (Mouse-ear cress).